The chain runs to 279 residues: Protoheme IX farnesyltransferase (279 aa).

The next 9 membrane-spanning stretches (helical) occupy residues 5-25 (LILL…AGYL), 33-53 (IAQA…AAAF), 84-103 (LAYS…LLLG), 108-125 (LFVF…TVIL), 133-153 (ILGG…LGAG), 159-179 (AVLI…ALAY), 201-221 (AAVA…MTLY), 222-242 (LAFG…VATI), and 256-276 (AMWK…LALI).

The protein belongs to the UbiA prenyltransferase family. Protoheme IX farnesyltransferase subfamily.

It localises to the cell membrane. It catalyses the reaction heme b + (2E,6E)-farnesyl diphosphate + H2O = Fe(II)-heme o + diphosphate. It functions in the pathway porphyrin-containing compound metabolism; heme O biosynthesis; heme O from protoheme: step 1/1. Its function is as follows. Converts heme B (protoheme IX) to heme O by substitution of the vinyl group on carbon 2 of heme B porphyrin ring with a hydroxyethyl farnesyl side group. The chain is Protoheme IX farnesyltransferase from Pyrobaculum arsenaticum (strain DSM 13514 / JCM 11321 / PZ6).